Consider the following 142-residue polypeptide: Small ribosomal subunit protein uS19 (142 aa).

This sequence belongs to the universal ribosomal protein uS19 family. In terms of assembly, component of the small ribosomal subunit. Mature ribosomes consist of a small (40S) and a large (60S) subunit. The 40S subunit contains about 32 different proteins and 1 molecule of RNA (18S). The 60S subunit contains 45 different proteins and 3 molecules of RNA (25S, 5.8S and 5S).

It is found in the cytoplasm. Component of the ribosome, a large ribonucleoprotein complex responsible for the synthesis of proteins in the cell. The small ribosomal subunit (SSU) binds messenger RNAs (mRNAs) and translates the encoded message by selecting cognate aminoacyl-transfer RNA (tRNA) molecules. The large subunit (LSU) contains the ribosomal catalytic site termed the peptidyl transferase center (PTC), which catalyzes the formation of peptide bonds, thereby polymerizing the amino acids delivered by tRNAs into a polypeptide chain. The nascent polypeptides leave the ribosome through a tunnel in the LSU and interact with protein factors that function in enzymatic processing, targeting, and the membrane insertion of nascent chains at the exit of the ribosomal tunnel. RPS15 has a role in the late stage of the assembly of pre-40S particles within the nucleus and controls their export to the cytoplasm. The protein is Small ribosomal subunit protein uS19 (RPS15) of Candida albicans (strain SC5314 / ATCC MYA-2876) (Yeast).